A 642-amino-acid polypeptide reads, in one-letter code: Myrosinase-binding protein 2 (642 aa).

4 Jacalin-type lectin domains span residues 2–151 (SEKV…HFFA), 156–291 (LKHF…HFAP), 334–477 (PNKV…YFAP), and 490–633 (SKKL…HAVP). Residues 296-334 (TPAPAPAPAPAPAPAPSPAPASAPVPAPAPTPAPAPAPP) are compositionally biased toward pro residues. Disordered stretches follow at residues 296-338 (TPAP…NKVE) and 479-499 (TNST…RGGN). Over residues 479-490 (TNSTTPSTPSTS) the composition is skewed to low complexity.

The protein belongs to the jacalin lectin family. In terms of tissue distribution, expressed in flowers. Detected mainly in ovules and styles of immature flowers, but also in pistils, styles, stamens, petals and embryos. Not detected in leaves.

This Arabidopsis thaliana (Mouse-ear cress) protein is Myrosinase-binding protein 2 (F-ATMBP).